The following is a 445-amino-acid chain: 23S rRNA (uracil(1939)-C(5))-methyltransferase RlmD (445 aa).

Positions 6 to 64 (RRLPREPFEIAITGLSHEGRGIAHHDERTLFVHGALPGERVRAVYTKRRRSVAEARVVE) constitute a TRAM domain. Residues Cys77, Cys83, Cys86, and Cys165 each coordinate [4Fe-4S] cluster. Residues Gln274, Phe303, Asn308, Glu324, Asp351, and Asp372 each contribute to the S-adenosyl-L-methionine site. The active-site Nucleophile is the Cys398.

It belongs to the class I-like SAM-binding methyltransferase superfamily. RNA M5U methyltransferase family. RlmD subfamily.

It catalyses the reaction uridine(1939) in 23S rRNA + S-adenosyl-L-methionine = 5-methyluridine(1939) in 23S rRNA + S-adenosyl-L-homocysteine + H(+). In terms of biological role, catalyzes the formation of 5-methyl-uridine at position 1939 (m5U1939) in 23S rRNA. This Alkalilimnicola ehrlichii (strain ATCC BAA-1101 / DSM 17681 / MLHE-1) protein is 23S rRNA (uracil(1939)-C(5))-methyltransferase RlmD.